The sequence spans 221 residues: Phosphoribosylformylglycinamidine synthase subunit PurQ (221 aa).

The Glutamine amidotransferase type-1 domain occupies 5–221; sequence TVGIVVFPGS…LYTLRSLITQ (217 aa). The Nucleophile role is filled by Cys-89. Active-site residues include His-197 and Glu-199.

In terms of assembly, part of the FGAM synthase complex composed of 1 PurL, 1 PurQ and 2 PurS subunits.

It is found in the cytoplasm. It catalyses the reaction N(2)-formyl-N(1)-(5-phospho-beta-D-ribosyl)glycinamide + L-glutamine + ATP + H2O = 2-formamido-N(1)-(5-O-phospho-beta-D-ribosyl)acetamidine + L-glutamate + ADP + phosphate + H(+). The enzyme catalyses L-glutamine + H2O = L-glutamate + NH4(+). Its pathway is purine metabolism; IMP biosynthesis via de novo pathway; 5-amino-1-(5-phospho-D-ribosyl)imidazole from N(2)-formyl-N(1)-(5-phospho-D-ribosyl)glycinamide: step 1/2. In terms of biological role, part of the phosphoribosylformylglycinamidine synthase complex involved in the purines biosynthetic pathway. Catalyzes the ATP-dependent conversion of formylglycinamide ribonucleotide (FGAR) and glutamine to yield formylglycinamidine ribonucleotide (FGAM) and glutamate. The FGAM synthase complex is composed of three subunits. PurQ produces an ammonia molecule by converting glutamine to glutamate. PurL transfers the ammonia molecule to FGAR to form FGAM in an ATP-dependent manner. PurS interacts with PurQ and PurL and is thought to assist in the transfer of the ammonia molecule from PurQ to PurL. This Prochlorococcus marinus subsp. pastoris (strain CCMP1986 / NIES-2087 / MED4) protein is Phosphoribosylformylglycinamidine synthase subunit PurQ.